Reading from the N-terminus, the 239-residue chain is Lipoprotein-releasing system ATP-binding protein LolD (239 aa).

In terms of domain architecture, ABC transporter spans 14–239 (IRAERLGKTY…KLRELAPSAV (226 aa)). Residue 50–57 (GASGAGKS) participates in ATP binding.

Belongs to the ABC transporter superfamily. Lipoprotein translocase (TC 3.A.1.125) family. As to quaternary structure, the complex is composed of two ATP-binding proteins (LolD) and two transmembrane proteins (LolC and LolE).

It localises to the cell inner membrane. Its function is as follows. Part of the ABC transporter complex LolCDE involved in the translocation of mature outer membrane-directed lipoproteins, from the inner membrane to the periplasmic chaperone, LolA. Responsible for the formation of the LolA-lipoprotein complex in an ATP-dependent manner. This is Lipoprotein-releasing system ATP-binding protein LolD from Xanthomonas campestris pv. campestris (strain 8004).